The sequence spans 135 residues: uncharacterized protein (135 aa).

A VOC domain is found at 4–129 (SIVHIALVVN…YGNLWDLLQL (126 aa)).

This sequence to B.subtilis YwkD.

This is an uncharacterized protein from Shewanella frigidimarina (strain NCIMB 400).